We begin with the raw amino-acid sequence, 338 residues long: tRNA (cytosine(34)-C(5))-methyltransferase, mitochondrial (338 aa).

S-adenosyl-L-methionine contacts are provided by residues 140-146 (CAAPGGK), Glu163, Asp194, and Asp212. Catalysis depends on Cys266, which acts as the Nucleophile.

It belongs to the class I-like SAM-binding methyltransferase superfamily. RsmB/NOP family.

It is found in the mitochondrion matrix. It catalyses the reaction cytidine(34) in mitochondrial tRNA + S-adenosyl-L-methionine = 5-methylcytidine(34) in mitochondrial tRNA + S-adenosyl-L-homocysteine + H(+). In terms of biological role, mitochondrial tRNA methyltransferase that mediates methylation of cytosine to 5-methylcytosine (m5C) at position 34 of mt-tRNA(Met). mt-tRNA(Met) methylation at cytosine(34) takes place at the wobble position of the anticodon and initiates the formation of 5-formylcytosine (f(5)c) at this position. mt-tRNA(Met) containing the f(5)c modification at the wobble position enables recognition of the AUA codon in addition to the AUG codon, expanding codon recognition in mitochondrial translation. In Bos taurus (Bovine), this protein is tRNA (cytosine(34)-C(5))-methyltransferase, mitochondrial.